The chain runs to 324 residues: Lactonase drp35 (324 aa).

Ca(2+) contacts are provided by E47, S109, G111, D129, T132, Y134, D137, N184, D235, and S236. The active-site Proton donor is the D235.

Belongs to the SMP-30/CGR1 family. Ca(2+) serves as cofactor.

It is found in the cytoplasm. Its function is as follows. Exhibits lactonase activity. Acts in cells with perturbed membrane integrity and is possibly related to the membrane homeostasis. The protein is Lactonase drp35 (drp35) of Staphylococcus aureus (strain USA300).